The chain runs to 607 residues: 2-isopropylmalate synthase (607 aa).

Over residues 1-10 the composition is skewed to polar residues; the sequence is MASFSESLSQ. The segment at 1–40 is disordered; it reads MASFSESLSQDPADAYKSAPSITKPMGPPSPGQPQWNPQR. Positions 75–349 constitute a Pyruvate carboxyltransferase domain; that stretch reads PLWCAVDLRD…DPQIDFSNID (275 aa). Mg(2+) contacts are provided by aspartate 84, histidine 288, histidine 290, and asparagine 324. Positions 491-607 are regulatory domain; it reads PVQPLERIKQ…VSAVNRAMPR (117 aa).

It belongs to the alpha-IPM synthase/homocitrate synthase family. LeuA type 2 subfamily. As to quaternary structure, homodimer. Requires Mg(2+) as cofactor.

It localises to the cytoplasm. The catalysed reaction is 3-methyl-2-oxobutanoate + acetyl-CoA + H2O = (2S)-2-isopropylmalate + CoA + H(+). It functions in the pathway amino-acid biosynthesis; L-leucine biosynthesis; L-leucine from 3-methyl-2-oxobutanoate: step 1/4. Catalyzes the condensation of the acetyl group of acetyl-CoA with 3-methyl-2-oxobutanoate (2-ketoisovalerate) to form 3-carboxy-3-hydroxy-4-methylpentanoate (2-isopropylmalate). This Mycobacterium leprae (strain TN) protein is 2-isopropylmalate synthase.